We begin with the raw amino-acid sequence, 422 residues long: Histidinol dehydrogenase (422 aa).

NAD(+) contacts are provided by tyrosine 123, glutamine 183, and asparagine 206. Substrate is bound by residues serine 229, glutamine 251, and histidine 254. Zn(2+) is bound by residues glutamine 251 and histidine 254. Active-site proton acceptor residues include glutamate 320 and histidine 321. Substrate is bound by residues histidine 321, aspartate 354, glutamate 408, and histidine 413. Aspartate 354 provides a ligand contact to Zn(2+). Position 413 (histidine 413) interacts with Zn(2+).

It belongs to the histidinol dehydrogenase family. Zn(2+) is required as a cofactor.

It carries out the reaction L-histidinol + 2 NAD(+) + H2O = L-histidine + 2 NADH + 3 H(+). The protein operates within amino-acid biosynthesis; L-histidine biosynthesis; L-histidine from 5-phospho-alpha-D-ribose 1-diphosphate: step 9/9. Catalyzes the sequential NAD-dependent oxidations of L-histidinol to L-histidinaldehyde and then to L-histidine. The protein is Histidinol dehydrogenase of Natronomonas pharaonis (strain ATCC 35678 / DSM 2160 / CIP 103997 / JCM 8858 / NBRC 14720 / NCIMB 2260 / Gabara) (Halobacterium pharaonis).